Consider the following 351-residue polypeptide: Anthranilate phosphoribosyltransferase (351 aa).

5-phospho-alpha-D-ribose 1-diphosphate is bound by residues G84, 87 to 88 (GD), 95 to 98 (NISS), 113 to 121 (KHGNRGASS), and A125. G84 is an anthranilate binding site. S97 serves as a coordination point for Mg(2+). N116 contributes to the anthranilate binding site. R171 is a binding site for anthranilate. Mg(2+)-binding residues include D229 and K230.

This sequence belongs to the anthranilate phosphoribosyltransferase family. Homodimer. Requires Mg(2+) as cofactor.

It carries out the reaction N-(5-phospho-beta-D-ribosyl)anthranilate + diphosphate = 5-phospho-alpha-D-ribose 1-diphosphate + anthranilate. It participates in amino-acid biosynthesis; L-tryptophan biosynthesis; L-tryptophan from chorismate: step 2/5. Functionally, catalyzes the transfer of the phosphoribosyl group of 5-phosphorylribose-1-pyrophosphate (PRPP) to anthranilate to yield N-(5'-phosphoribosyl)-anthranilate (PRA). The chain is Anthranilate phosphoribosyltransferase from Clavibacter michiganensis subsp. michiganensis (strain NCPPB 382).